The chain runs to 234 residues: Probable Ufm1-specific protease 1 (234 aa).

Catalysis depends on residues Cys-70, Asp-194, and His-196.

It belongs to the peptidase C78 family.

In terms of biological role, thiol protease which recognizes and hydrolyzes the peptide bond at the C-terminal Gly of UFM1, a ubiquitin-like modifier protein bound to a number of target proteins. In Drosophila melanogaster (Fruit fly), this protein is Probable Ufm1-specific protease 1.